A 295-amino-acid chain; its full sequence is Putative enoyl reductase C646.07c (295 aa).

Residues 1 to 84 lie on the Cytoplasmic side of the membrane; it reads MSITLSSRGR…KDLGPQIGWR (84 aa). A helical transmembrane segment spans residues 85 to 105; that stretch reads TVFMIEYLGPLVIHLFFILNY. Residues 106–157 lie on the Lumenal side of the membrane; it reads KWIYRKDYNLCLNQKIAFVLVMLHFMKREYESIFVHRFSLATMPLRNIFKNC. Residues 158–178 form a helical membrane-spanning segment; the sequence is AHYHLLSGLFLAYFIYGPWHA. Over 179–186 the chain is Cytoplasmic; sequence NDYIKPNH. The chain crosses the membrane as a helical span at residues 187–207; it reads LLFLIVGWAFAVLSNFRTHII. Topologically, residues 208–223 are lumenal; it reads LRDLRPAGSKKRVIPT. Residues 224–246 traverse the membrane as a helical segment; that stretch reads GYGFNLVSFPNYFFESLGWLFFA. Over 247 to 250 the chain is Cytoplasmic; that stretch reads LLTK. Residues 251-268 traverse the membrane as a helical segment; sequence SWASWIFLFVGSAQMFVW. The Lumenal segment spans residues 269-295; it reads AKKKHARYLKEFPNYPRSRKIMIPFFL.

The protein belongs to the steroid 5-alpha reductase family.

Its subcellular location is the endoplasmic reticulum membrane. It carries out the reaction a (2E)-enoyl-CoA + NADPH + H(+) = a 2,3-saturated acyl-CoA + NADP(+). The chain is Putative enoyl reductase C646.07c from Schizosaccharomyces pombe (strain 972 / ATCC 24843) (Fission yeast).